A 688-amino-acid polypeptide reads, in one-letter code: Glycine--tRNA ligase beta subunit (688 aa).

This sequence belongs to the class-II aminoacyl-tRNA synthetase family. Tetramer of two alpha and two beta subunits.

It is found in the cytoplasm. It carries out the reaction tRNA(Gly) + glycine + ATP = glycyl-tRNA(Gly) + AMP + diphosphate. The polypeptide is Glycine--tRNA ligase beta subunit (Haemophilus influenzae (strain PittEE)).